A 654-amino-acid polypeptide reads, in one-letter code: Macrolide export ATP-binding/permease protein MacB (654 aa).

The ABC transporter domain occupies 6–244 (IELRGLRREF…RAGDAPTRQP (239 aa)). 42-49 (GASGSGKS) is a binding site for ATP. The next 4 helical transmembrane spans lie at 278–298 (FLTM…VAVG), 527–547 (LTLM…IGVM), 584–604 (VVCL…AALF), and 619–639 (SIAA…YLPA).

The protein belongs to the ABC transporter superfamily. Macrolide exporter (TC 3.A.1.122) family. Homodimer.

The protein localises to the cell inner membrane. In terms of biological role, non-canonical ABC transporter that contains transmembrane domains (TMD), which form a pore in the inner membrane, and an ATP-binding domain (NBD), which is responsible for energy generation. Confers resistance against macrolides. The chain is Macrolide export ATP-binding/permease protein MacB from Rhodopseudomonas palustris (strain HaA2).